Reading from the N-terminus, the 392-residue chain is Putative F-box protein At1g71320 (392 aa).

The F-box domain maps to 8–55; it reads NPKTIFIPDDIAEGIFHHLPIKSLARFKVLSKKWTSMIESTYFSHKRL.

This is Putative F-box protein At1g71320 from Arabidopsis thaliana (Mouse-ear cress).